Consider the following 470-residue polypeptide: Nitric oxide synthase, inducible (470 aa).

L-arginine-binding residues include tryptophan 2, tyrosine 3, and glutamate 7. Arginine 11, tryptophan 93, and phenylalanine 106 together coordinate (6R)-L-erythro-5,6,7,8-tetrahydrobiopterin. Tyrosine 121 lines the heme b pocket. The calmodulin-binding stretch occupies residues 145–165 (FKAVARAALFSSTLMSRVLAN). The Flavodoxin-like domain occupies 169 to 307 (CTVLYATETG…AFSAWALTAL (139 aa)). FMN-binding residues include threonine 175, glutamate 176, threonine 177, lysine 179, serine 180, serine 221, threonine 222, serine 258, cysteine 265, glutamate 291, and glutamine 295. Residue arginine 380 participates in NADP(+) binding. Position 403 (histidine 403) interacts with FAD. Threonine 440 provides a ligand contact to NADP(+).

The protein belongs to the NOS family. Homodimer. Heme b serves as cofactor. It depends on FAD as a cofactor. FMN is required as a cofactor. The cofactor is (6R)-L-erythro-5,6,7,8-tetrahydrobiopterin.

The protein localises to the cytoplasm. It localises to the cytosol. The enzyme catalyses 2 L-arginine + 3 NADPH + 4 O2 + H(+) = 2 L-citrulline + 2 nitric oxide + 3 NADP(+) + 4 H2O. Its activity is regulated as follows. Not stimulated by calcium/calmodulin. Functionally, produces nitric oxide (NO) which is a messenger molecule with diverse functions throughout the body. In macrophages, NO mediates tumoricidal and bactericidal actions. Also has nitrosylase activity and mediates cysteine S-nitrosylation of cytoplasmic target proteins such COX2. This chain is Nitric oxide synthase, inducible (nos2), found in Oncorhynchus mykiss (Rainbow trout).